Consider the following 263-residue polypeptide: MTHPQPFIAVIPARLASTRLPNKPLADLGGKPMVVRVAERAREAGAQQVLIASDAQSVLDAAREHGFDAVLTRADHPSGTDRLAEVAAACGWQDDTVVVNVQGDEPLIDPVLVRDVASHLAAHPACAIATAAHPIHDAADVFNPNVVKVALDAQSVALYFSRAPIPWSRDAYQPHWPDVAAMPAPAAPVYRHIGLYAYRARFLRTYPSLAQAPIEQAEQLEQLRALWHGERIAVLVTERAPAAGVDTPADLARVQALFRPDSK.

Belongs to the KdsB family.

The protein resides in the cytoplasm. The enzyme catalyses 3-deoxy-alpha-D-manno-oct-2-ulosonate + CTP = CMP-3-deoxy-beta-D-manno-octulosonate + diphosphate. The protein operates within nucleotide-sugar biosynthesis; CMP-3-deoxy-D-manno-octulosonate biosynthesis; CMP-3-deoxy-D-manno-octulosonate from 3-deoxy-D-manno-octulosonate and CTP: step 1/1. Its pathway is bacterial outer membrane biogenesis; lipopolysaccharide biosynthesis. Activates KDO (a required 8-carbon sugar) for incorporation into bacterial lipopolysaccharide in Gram-negative bacteria. In Burkholderia multivorans (strain ATCC 17616 / 249), this protein is 3-deoxy-manno-octulosonate cytidylyltransferase.